Here is a 169-residue protein sequence, read N- to C-terminus: MAVNISKQPTRSFSLDEVTVRNELKLSQGFVMRKDLKGPRLIVTSGMGSTFSKCSLFIFKAVMILHTCLIVKSIRIFSKKKKRNGSMHNMYYASVPFLLFSNAYSIDFSRHVNEFLEKKRCEMIIPLKLLADHTYLSEIEYVSLNADGQYSQLQDIFFIHDVFFVYFRF.

The chain crosses the membrane as a helical span at residues 55–77; sequence SLFIFKAVMILHTCLIVKSIRIF.

The protein resides in the membrane. This is an uncharacterized protein from Saccharomyces cerevisiae (strain ATCC 204508 / S288c) (Baker's yeast).